Reading from the N-terminus, the 425-residue chain is Glutamyl-tRNA reductase (425 aa).

Residues 49–52, serine 109, 114–116, and glutamine 120 each bind substrate; these read TCNR and EGQ. Cysteine 50 acts as the Nucleophile in catalysis. 189-194 serves as a coordination point for NADP(+); the sequence is GAGKMS.

It belongs to the glutamyl-tRNA reductase family. Homodimer.

It carries out the reaction (S)-4-amino-5-oxopentanoate + tRNA(Glu) + NADP(+) = L-glutamyl-tRNA(Glu) + NADPH + H(+). The protein operates within porphyrin-containing compound metabolism; protoporphyrin-IX biosynthesis; 5-aminolevulinate from L-glutamyl-tRNA(Glu): step 1/2. Its pathway is porphyrin-containing compound metabolism; chlorophyll biosynthesis. Its function is as follows. Catalyzes the NADPH-dependent reduction of glutamyl-tRNA(Glu) to glutamate 1-semialdehyde (GSA). The sequence is that of Glutamyl-tRNA reductase from Picosynechococcus sp. (strain ATCC 27264 / PCC 7002 / PR-6) (Agmenellum quadruplicatum).